Here is a 424-residue protein sequence, read N- to C-terminus: Tubby protein homolog 1 (424 aa).

Positions 19–47 (MLEDKQKQKRHQSAGSVRTTTTTSSMSMN) are disordered. Residues 37–47 (TTTTTSSMSMN) are compositionally biased toward low complexity.

Belongs to the TUB family. Interacts with rgb-3.

It is found in the cytoplasm. Its subcellular location is the cell projection. It localises to the axon. The protein localises to the dendrite. The protein resides in the cilium. Its function is as follows. Has a role in fat regulation independent of daf-16. Implicated in ciliar sensory function which is required for normal sensory behavior such as chemotaxis. Functions in life span control via the insulin/IGF-1 pathway. Thought to be involved in neuronal trafficking. The polypeptide is Tubby protein homolog 1 (Caenorhabditis briggsae).